Here is a 314-residue protein sequence, read N- to C-terminus: tRNA pseudouridine synthase B (314 aa).

Substrate is bound at residue H43. D48 functions as the Nucleophile in the catalytic mechanism. The substrate site is built by Y76, Y179, and L200.

Belongs to the pseudouridine synthase TruB family. Type 1 subfamily.

The enzyme catalyses uridine(55) in tRNA = pseudouridine(55) in tRNA. In terms of biological role, responsible for synthesis of pseudouridine from uracil-55 in the psi GC loop of transfer RNAs. This Citrobacter koseri (strain ATCC BAA-895 / CDC 4225-83 / SGSC4696) protein is tRNA pseudouridine synthase B.